Here is a 330-residue protein sequence, read N- to C-terminus: uncharacterized protein (330 aa).

The next 10 membrane-spanning stretches (helical) occupy residues 27–47 (MGAYVSLAAAMAIVGSSVVVG), 56–76 (VFLSSGLRFLIASVVLLMLLF), 90–110 (VFVLLVQSFTGVFLFSICLLY), 119–139 (ESGILTSTTPMLIGILSFFLL), 147–167 (TLIGILLAVCGVMAINLFGAG), 176–196 (LFGNMLIIAAVIGEALFTLMA), 206–226 (LAISTFVSLFGFLFFLPFALF), 243–263 (YVLYYALFVTVLAFYLWYSGV), 270–290 (VSGIFTSVLPVSAVILSGVIL), and 294–314 (FEFVHFIGIACVIGGIFVTVI). 2 consecutive EamA domains span residues 38 to 163 (AIVG…AINL) and 187 to 314 (IGEA…VTVI).

It belongs to the EamA transporter family.

Its subcellular location is the cell membrane. This is an uncharacterized protein from Bacillus subtilis (strain 168).